The following is a 403-amino-acid chain: MTTAERTAPPDALTVPASRAPGCPFDPAPDVTEAARTEPVTRATLWDGSSCWLVTRHQDVRAVLGDPRFSADAHRTGFPFLTAGGREIIGTNPTFLRMDDPEHARLRRMLTADFIVKKVEAMRPEVQRLADDLVDRMTTGRTSADLVTEFALPLPSLVICLLLGVPYEDHAFFQERSRVLLTLRSTPEEVRAAQDELLEYLARLARTKRERPDDAIISRLVARGELDDTQIATMGRLLLVAGHETTANMTALSTLVLLRNPDQLARLRAEPALVKGAVEELLRYLTIVHNGVPRIATEDVLIGGRTIAAGEGVLCMISSANRDAEVFPGGDDLDVARDARRHVAFGFGVHQCLGQPLARVELQIAIETLLRRLPDLRLAVPHEEIPFRGDMAIYGVHSLPIAW.

The tract at residues 1–24 (MTTAERTAPPDALTVPASRAPGCP) is disordered. Position 352 (cysteine 352) interacts with heme.

Belongs to the cytochrome P450 family. Heme is required as a cofactor.

Its function is as follows. Metabolism of a number of sulfonylurea herbicides. This chain is Cytochrome P450-SU2 (cyp105B1), found in Streptomyces griseolus.